Here is a 149-residue protein sequence, read N- to C-terminus: D-aminoacyl-tRNA deacylase (149 aa).

The short motif at 137-138 is the Gly-cisPro motif, important for rejection of L-amino acids element; the sequence is GP.

This sequence belongs to the DTD family. In terms of assembly, homodimer.

The protein resides in the cytoplasm. The catalysed reaction is glycyl-tRNA(Ala) + H2O = tRNA(Ala) + glycine + H(+). The enzyme catalyses a D-aminoacyl-tRNA + H2O = a tRNA + a D-alpha-amino acid + H(+). Its function is as follows. An aminoacyl-tRNA editing enzyme that deacylates mischarged D-aminoacyl-tRNAs. Also deacylates mischarged glycyl-tRNA(Ala), protecting cells against glycine mischarging by AlaRS. Acts via tRNA-based rather than protein-based catalysis; rejects L-amino acids rather than detecting D-amino acids in the active site. By recycling D-aminoacyl-tRNA to D-amino acids and free tRNA molecules, this enzyme counteracts the toxicity associated with the formation of D-aminoacyl-tRNA entities in vivo and helps enforce protein L-homochirality. This chain is D-aminoacyl-tRNA deacylase, found in Clostridium botulinum (strain Kyoto / Type A2).